Here is a 250-residue protein sequence, read N- to C-terminus: 5-oxoprolinase subunit A (250 aa).

This sequence belongs to the LamB/PxpA family. Forms a complex composed of PxpA, PxpB and PxpC.

It catalyses the reaction 5-oxo-L-proline + ATP + 2 H2O = L-glutamate + ADP + phosphate + H(+). Its function is as follows. Catalyzes the cleavage of 5-oxoproline to form L-glutamate coupled to the hydrolysis of ATP to ADP and inorganic phosphate. In Staphylococcus aureus (strain MW2), this protein is 5-oxoprolinase subunit A.